The primary structure comprises 491 residues: Synaptotagmin-9 (491 aa).

The Vesicular segment spans residues 1–52; the sequence is MPGARDALCHQALQLLAELCARGALEHDSCQDFIYHLRDRARPRLRDPDISV. Residues 9–31 form a cysteine motif region; it reads CHQALQLLAELCARGALEHDSCQ. The helical transmembrane segment at 53–73 threads the bilayer; the sequence is SLLTLVVTACGLALFGVSLFV. Over 74 to 491 the chain is Cytoplasmic; that stretch reads SWKLCWVPWR…AHWHSLVEKR (418 aa). S177 carries the phosphoserine modification. C2 domains follow at residues 220–341 and 352–485; these read ACGK…ILWK and DLGE…AHWH. Positions 251, 257, 309, 310, 311, 314, 317, 383, 389, 443, and 445 each coordinate Ca(2+).

The protein belongs to the synaptotagmin family. As to quaternary structure, homodimer; disulfide-linked via the cysteine motif. Can also form heterodimers with SYT3, SYT6, SYT7 and SYT10. Requires Ca(2+) as cofactor.

Its subcellular location is the cytoplasmic vesicle. It is found in the secretory vesicle. The protein localises to the synaptic vesicle membrane. May be involved in Ca(2+)-dependent exocytosis of secretory vesicles through Ca(2+) and phospholipid binding to the C2 domain or may serve as Ca(2+) sensors in the process of vesicular trafficking and exocytosis. This chain is Synaptotagmin-9 (SYT9), found in Homo sapiens (Human).